Here is a 397-residue protein sequence, read N- to C-terminus: HTH-type transcriptional regulator GalR (397 aa).

2 consecutive HTH lysR-type domains span residues 7–64 and 99–156; these read PNLM…MRLT and FQAR…LQPT. 2 DNA-binding regions (H-T-H motif) span residues 24-43 and 116-135; these read VSRA…RAIA and MQTV…AALK.

Belongs to the LysR transcriptional regulatory family.

Its function is as follows. Transcriptional regulator for the galBCD and galTAP operons, encoding genes of the gallate degradation pathway. This chain is HTH-type transcriptional regulator GalR (galR), found in Pseudomonas putida (strain ATCC 47054 / DSM 6125 / CFBP 8728 / NCIMB 11950 / KT2440).